The following is a 137-amino-acid chain: Lysozyme (137 aa).

An N-terminal signal peptide occupies residues Met1 to Ala18. Residues Lys19–Cys137 form the C-type lysozyme domain. Cystine bridges form between Cys24-Cys137, Cys45-Cys127, Cys79-Cys93, and Cys89-Cys107. Residues Glu50 and Asp67 contribute to the active site.

It belongs to the glycosyl hydrolase 22 family.

The catalysed reaction is Hydrolysis of (1-&gt;4)-beta-linkages between N-acetylmuramic acid and N-acetyl-D-glucosamine residues in a peptidoglycan and between N-acetyl-D-glucosamine residues in chitodextrins.. In terms of biological role, lysozymes have primarily a bacteriolytic function; those in tissues and body fluids are associated with the monocyte-macrophage system and enhance the activity of immunoagents. Active against E.coli and M.luteus. The chain is Lysozyme from Bombyx mori (Silk moth).